The following is a 694-amino-acid chain: Cyclic nucleotide-gated ion channel 4 (694 aa).

Over residues 1 to 15 the composition is skewed to basic and acidic residues; it reads MATEQEFTRASRFSR. Residues 1–64 are disordered; it reads MATEQEFTRA…RIGLTCGGRR (64 aa). Over 1–92 the chain is Cytoplasmic; sequence MATEQEFTRA…RSKWVREWNK (92 aa). The span at 24–53 shows a compositional bias: acidic residues; sequence SEEDNTEEEDEEEEEMEEIEEEEEEEEEED. Residues 93-113 traverse the membrane as a helical segment; that stretch reads VFLLVCATGLFVDPLFLYTLS. Residues 114–126 are Extracellular-facing; sequence VSDTCMCLLVDGW. The helical transmembrane segment at 127–147 threads the bilayer; sequence LALTVTALRSMTDLLHLWNIW. Residues 148-187 are Cytoplasmic-facing; the sequence is IQFKIARRWPYPGGDSDGDTNKGGGTRGSTRVAPPYVKKN. The chain crosses the membrane as a helical span at residues 188 to 208; the sequence is GFFFDLFVILPLPQVVLWVVI. The Extracellular portion of the chain corresponds to 209 to 216; sequence PSLLKRGS. Residues 217–237 traverse the membrane as a helical segment; the sequence is VTLVVSVLLVTFLFQYLPKIY. Topologically, residues 238–251 are cytoplasmic; that stretch reads HSIRHLRRNATLSG. Residues 252–272 form a helical membrane-spanning segment; it reads YIFGTVWWGIALNMIAYFVAA. Topologically, residues 273-392 are extracellular; it reads HAAGACWYLL…LESTTEWSEV (120 aa). The chain crosses the membrane as a helical span at residues 393–413; sequence VFNIIVLTSGLLLVTMLIGNI. Residues 414-694 are Cytoplasmic-facing; that stretch reads KVFLHATTSK…KPNPDDFDDY (281 aa). Residues 496–626 and aspartate 565 each bind a nucleoside 3',5'-cyclic phosphate; that span reads LFQH…ARYY. The tract at residues 610-626 is calmodulin-binding; it reads FRYTFVNEKVKRSARYY. Residues 631 to 660 form the IQ domain; it reads RTWAAVAVQLAWRRYKHRLTLTSLSFIRPR.

It belongs to the cyclic nucleotide-gated cation channel (TC 1.A.1.5) family. Homotetramer or heterotetramer.

Its subcellular location is the cell membrane. Acts as a cyclic nucleotide-gated ion channel. Permeable to potassium and sodium in a cyclic nucleotide-dependent fashion (cAMP or cGMP). Might constitute a common downstream component of the signaling pathways leading to hypersensitive response (HR). The chain is Cyclic nucleotide-gated ion channel 4 (CNGC4) from Arabidopsis thaliana (Mouse-ear cress).